The sequence spans 147 residues: Hemoglobin subunit beta-2 (147 aa).

The 145-residue stretch at 3 to 147 (EWTDSERAII…VVSALGRQYH (145 aa)) folds into the Globin domain. 2 residues coordinate heme b: His64 and His93.

It belongs to the globin family. Hb 3 is a heterotetramer of two alpha-2 and two beta-2 chains. In terms of tissue distribution, red blood cells.

In terms of biological role, involved in oxygen transport from gills to the various peripheral tissues. In Boreogadus saida (Polar cod), this protein is Hemoglobin subunit beta-2 (hbb2).